The sequence spans 82 residues: UPF0180 protein BT9727_1277 (82 aa).

This sequence belongs to the UPF0180 family.

This Bacillus thuringiensis subsp. konkukian (strain 97-27) protein is UPF0180 protein BT9727_1277.